A 213-amino-acid polypeptide reads, in one-letter code: Skin granule protein (213 aa).

A signal peptide spans Met1–Gly26. 3 repeat units span residues Leu27–Gly48, Leu49–Gly70, and Leu71–Gly92. Residues Leu27–Gln104 are 4 X 22 AA approximate tandem repeats. Residues Leu93 to Gln104 form a 4; truncated repeat. Residues Trp162 to Lys213 are disordered. The segment covering Arg166–Lys213 has biased composition (basic residues).

It localises to the secreted. The sequence is that of Skin granule protein (sgp) from Xenopus laevis (African clawed frog).